The following is a 111-amino-acid chain: COX assembly mitochondrial protein (111 aa).

One can recognise a CHCH domain in the interval 39–82 (YKKCANFVQAMADCAKANGMKVFPTCDKQRDEMKSCLLFYQTDE). 2 short sequence motifs (cx9C motif) span residues 42–52 (CANFVQAMADC) and 64–74 (CDKQRDEMKSC). 2 disulfide bridges follow: Cys-42–Cys-74 and Cys-52–Cys-64.

This sequence belongs to the CMC family.

It is found in the mitochondrion inner membrane. Required for mitochondrial cytochrome c oxidase (COX) assembly and respiration. Binds copper. May be involved in copper trafficking and distribution to mitochondrial COX and SOD1. The protein is COX assembly mitochondrial protein (CMC1) of Saccharomyces cerevisiae (strain YJM789) (Baker's yeast).